A 392-amino-acid polypeptide reads, in one-letter code: Protein trapped in endoderm-1 (392 aa).

The Extracellular portion of the chain corresponds to 1-39 (MDQDMGMATGYFQDADMQMDEPAAATQSIYPHSATLFAA). A helical membrane pass occupies residues 40–60 (ISACVFVTIGVLGNLITLLAL). At 61 to 73 (LKSPTIREHATTA) the chain is on the cytoplasmic side. The helical transmembrane segment at 74–94 (FVISLSISDLLFCSFSLPLTA) threads the bilayer. Topologically, residues 95 to 110 (VRFFQESWTFGTTLCK) are extracellular. Residues 111–131 (IFPVIFYGNVAVSLLSMVGIT) form a helical membrane-spanning segment. The Cytoplasmic portion of the chain corresponds to 132–156 (LNRYILIACHSRYSQIYKPKFITLQ). A helical transmembrane segment spans residues 157-177 (LLFVWAVSFLLLLPPILGIWG). At 178–202 (EMGLDEATFSCTILKKEGRSIKKTL) the chain is on the extracellular side. Residues 203-223 (FVIGFLLPCLVIIVSYSCIYI) form a helical membrane-spanning segment. Residues 224-268 (TVLHQKKKIRNHDNFQIAAAKGSSSSGGGSYMTTTCTRKAREDNR) are Cytoplasmic-facing. A helical transmembrane segment spans residues 269–289 (LTVMMVTIFLCFLVCFLPLML). The Extracellular portion of the chain corresponds to 290–302 (ANVVDDERNTSYP). N-linked (GlcNAc...) asparagine glycosylation occurs at Asn-298. A helical membrane pass occupies residues 303–323 (WLHIIASVMAWASSVINPIIY). Topologically, residues 324–392 (AASNRNYRVA…INQMCQTYSV (69 aa)) are cytoplasmic. A phosphoserine mark is found at Ser-359, Ser-362, and Ser-366. Thr-372 bears the Phosphothreonine mark.

The protein belongs to the G-protein coupled receptor 1 family. In embryos, expression is seen at highest levels in the cuprophilic cells and at lower levels in the amnioserosa, developing CNS, cardiac mesoderm primordium and midline glia.

The protein localises to the cell membrane. In terms of biological role, essential for the first active step of germ cell migration: transepithelial migration of germ cells through the posterior midgut (PMG) epithelium. This Drosophila melanogaster (Fruit fly) protein is Protein trapped in endoderm-1 (Tre1).